The primary structure comprises 208 residues: FMN-dependent NADH:quinone oxidoreductase (208 aa).

99-102 (MWNF) serves as a coordination point for FMN.

It belongs to the azoreductase type 1 family. Homodimer. FMN is required as a cofactor.

It catalyses the reaction 2 a quinone + NADH + H(+) = 2 a 1,4-benzosemiquinone + NAD(+). The enzyme catalyses N,N-dimethyl-1,4-phenylenediamine + anthranilate + 2 NAD(+) = 2-(4-dimethylaminophenyl)diazenylbenzoate + 2 NADH + 2 H(+). Quinone reductase that provides resistance to thiol-specific stress caused by electrophilic quinones. In terms of biological role, also exhibits azoreductase activity. Catalyzes the reductive cleavage of the azo bond in aromatic azo compounds to the corresponding amines. This is FMN-dependent NADH:quinone oxidoreductase from Brevibacillus brevis (strain 47 / JCM 6285 / NBRC 100599).